The following is a 1580-amino-acid chain: Collagen alpha-1(XVI) chain (1580 aa).

The first 21 residues, 1 to 21, serve as a signal peptide directing secretion; sequence MLTSWAPGLWVLGLWATFSHG. The N-linked (GlcNAc...) asparagine glycan is linked to N47. The Laminin G-like domain maps to 50–231; it reads GFNLIRRLNL…LQQAHIYCDP (182 aa). Positions 232-374 are nonhelical region 10 (NC10); that stretch reads ELVLEEGCCE…SPDAPLQCVE (143 aa). Residues 324–547 are disordered; it reads RESNVTLGPS…DPAPAWEGLG (224 aa). N327 carries N-linked (GlcNAc...) asparagine glycosylation. In terms of domain architecture, Collagen-like 1 spans 375–424; sequence GPKGEKGESGDLGPPGLPGPTGQKGQKGEKGDGGLKGLPGKPGRDGRPGE. The triple-helical region 9 (COL9) with 3 imperfections stretch occupies residues 375–509; it reads GPKGEKGESG…PGTKGEKGDP (135 aa). Pro residues predominate over residues 449-460; that stretch reads PGPPGLPGPPGI. The segment covering 486-495 has biased composition (gly residues); that stretch reads GKEGPGGKPG. Residues 510 to 524 form a nonhelical region 9 (NC9) region; that stretch reads CEVCPTLPEGSQNFV. Positions 525-570 are triple-helical region 8 (COL8) with 1 imperfection; that stretch reads GLPGKPGPKGEPGDPAPAWEGLGTVGLKGDRGDPGIQGMKGEKGEP. The Cell attachment site motif lies at 555–557; sequence RGD. The nonhelical region 8 (NC8) stretch occupies residues 571-586; sequence CSSCSSGVGAQHLGPS. A compositionally biased stretch (low complexity) spans 585–598; the sequence is PSPGHGLPGLPGTS. A disordered region spans residues 585–935; it reads PSPGHGLPGL…LPGQPGLTAE (351 aa). Residues 587–640 are triple-helical region 7 (COL7) with 1 imperfection; sequence PGHGLPGLPGTSGIPGPRGLKGEKGSFGDTGPAGVPGSPGPVGPAGIKGAKGEP. Collagen-like domains follow at residues 590–643 and 676–725; these read GLPG…PCEP and GLPG…PAGP. The segment at 641-661 is nonhelical region 7 (NC7); it reads CEPCTALSELQDGDMRVVHLP. The tract at residues 662 to 732 is triple-helical region 6 (COL6) with 1 imperfection; it reads GPAGEKGEPG…AGPKGEKGDG (71 aa). Positions 683 to 693 are enriched in basic and acidic residues; the sequence is KAGERGLKGQK. The segment covering 698-714 has biased composition (low complexity); sequence NPGDPGTPGITGQPGIS. The nonhelical region 6 (NC6) stretch occupies residues 733-747; sequence CTACPSLQGALTDVS. Residues 748–870 are triple-helical region 5 (COL5) with 3 imperfections; sequence GLPGKPGPKG…RGEKGEPGEC (123 aa). The Collagen-like 4 domain occupies 797–848; that stretch reads GAEGPQGEPGTQGLPGTQGLPGPRGPPGSAGEKGAQGSPGPKGAIGPMGPPG. Low complexity predominate over residues 801 to 817; that stretch reads PQGEPGTQGLPGTQGLP. Positions 871-881 are nonhelical region 5 (NC5); that stretch reads SCPSRGEPIFS. Residues 882-933 are triple-helical region 4 (COL4) with 2 imperfections; that stretch reads GMPGAPGLWMGSSSQPGPQGPPGVPGPPGPPGMPGLQGVPGHNGLPGQPGLT. Residues 899-914 show a composition bias toward pro residues; sequence PQGPPGVPGPPGPPGM. The segment at 934–967 is nonhelical region 4 (NC4); sequence AELGSLPIEKHLLKSICGDCAQGQTAHPAFLLEK. Residues 968 to 982 are triple-helical region 3 (COL3); it reads GEKGDQGIPGVPGFD. The tract at residues 983 to 1005 is nonhelical region 3 (NC3); that stretch reads NCARCFIERERPRAEEARGDNSE. Disordered stretches follow at residues 995-1405 and 1445-1523; these read RAEE…LPGS and AAAP…GYGK. The Cell attachment site signature appears at 1000–1002; the sequence is RGD. The 58-residue stretch at 1006 to 1063 folds into the Collagen-like 5 domain; the sequence is GEPGCSGSPGLPGPPGMPGQRGEEGPPGMRGSPGPPGPIGLQGERGLTGLTGDKGEPG. Residues 1006-1409 are triple-helical region 2 (COL2) with 2 imperfections; that stretch reads GEPGCSGSPG…PGLPGSMGDM (404 aa). Residues 1098–1107 are compositionally biased toward low complexity; sequence SGPPGSEGLP. 2 stretches are compositionally biased toward pro residues: residues 1139–1148 and 1178–1187; these read FPGPPGPPGF and SPGPPGPPGI. The segment covering 1196–1205 has biased composition (basic and acidic residues); sequence LDGKDGKPGL. The Cell attachment site motif lies at 1206–1208; the sequence is RGD. The Collagen-like 6 domain occupies 1210-1263; sequence GPAGPPGLMGPPGFKGKTGHPGLPGPKGDCGKPGPPGSSGRPGAEGEPGAMGPQ. A compositionally biased stretch (low complexity) spans 1247–1263; that stretch reads SSGRPGAEGEPGAMGPQ. Pro residues predominate over residues 1265 to 1281; sequence RPGPPGHLGPPGQPGPP. 3 Collagen-like domains span residues 1350 to 1407, 1448 to 1500, and 1504 to 1552; these read GQKG…GSMG, PGRP…GDIG, and AGEN…GKAG. The segment covering 1362–1371 has biased composition (gly residues); sequence GMPGGPGKSG. A compositionally biased stretch (low complexity) spans 1396–1405; sequence NPGLPGLPGS. Positions 1410 to 1448 are nonhelical region 2 (NC2); sequence VNYDDIKRFIRQEIIKLFDERMAYYTSRMQFPMEVAAAP. The interval 1449 to 1554 is triple-helical region 1 (COL1) with 2 imperfections; sequence GRPGPPGKDG…MGQPGKAGHC (106 aa). Positions 1555-1580 are nonhelical region 1 (NC1); it reads NPSDCFGAMPMEQQYPPMKSMKGPFG.

Belongs to the fibril-associated collagens with interrupted helices (FACIT) family. As to quaternary structure, homotrimer. Interacts with FBN1, fibronectin and integrins ITGA1/ITGB1 and ITGA2/ITGB1. Integrin ITGA1/ITGB1 binds to a unique site within COL16A1 located close to its C-terminal end between collagenous domains COL1-COL3. In terms of processing, prolines at the third position of the tripeptide repeating unit (G-X-Y) are hydroxylated in some or all of the chains. Glycosylated. Expressed in most tissues examined with highest levels of expression observed in heart. Strongly expressed in cortical and medullar regions of kidney and more weakly expressed in lung. Also detected in the ciliary muscle of the eye, on the serosa layer lining the muscularis externa of intestinal tissue, and in the perimysium membrane lining both the cardiac muscle bundle and the smooth muscle tissue of the small intestine. Strongly stained in particulate or granular structures. Not detected in brain or skeletal muscle.

The protein localises to the secreted. The protein resides in the extracellular space. It is found in the extracellular matrix. In terms of biological role, involved in mediating cell attachment and inducing integrin-mediated cellular reactions, such as cell spreading and alterations in cell morphology. The polypeptide is Collagen alpha-1(XVI) chain (Mus musculus (Mouse)).